The sequence spans 75 residues: Protein Tlp homolog (75 aa).

Belongs to the Tlp family.

The protein is Protein Tlp homolog of Clostridium acetobutylicum (strain ATCC 824 / DSM 792 / JCM 1419 / IAM 19013 / LMG 5710 / NBRC 13948 / NRRL B-527 / VKM B-1787 / 2291 / W).